Reading from the N-terminus, the 424-residue chain is Pachytene checkpoint protein 2 homolog (424 aa).

171-178 (GPPGTGKT) provides a ligand contact to ATP.

It belongs to the AAA ATPase family. PCH2 subfamily.

Functionally, plays a key role in chromosome recombination and chromosome structure development during meiosis. Required at early steps in meiotic recombination that leads to non-crossovers pathways. Also needed for efficient completion of homologous synapsis by influencing crossover distribution along the chromosomes affecting both crossovers and non-crossovers pathways. The sequence is that of Pachytene checkpoint protein 2 homolog (trip13) from Danio rerio (Zebrafish).